The following is a 283-amino-acid chain: RNase adapter protein RapZ (283 aa).

8-15 (GRSGSGKS) contacts ATP. Residue 56-59 (DVRN) coordinates GTP. The segment at 266–283 (RSRGKNVQSRHRTLEKRK) is RNA-binding.

This sequence belongs to the RapZ-like family. RapZ subfamily. Homotrimer.

In terms of biological role, modulates the synthesis of GlmS, by affecting the processing and stability of the regulatory small RNA GlmZ. When glucosamine-6-phosphate (GlcN6P) concentrations are high in the cell, RapZ binds GlmZ and targets it to cleavage by RNase E. Consequently, GlmZ is inactivated and unable to activate GlmS synthesis. Under low GlcN6P concentrations, RapZ is sequestered and inactivated by an other regulatory small RNA, GlmY, preventing GlmZ degradation and leading to synthesis of GlmS. The polypeptide is RNase adapter protein RapZ (Photorhabdus laumondii subsp. laumondii (strain DSM 15139 / CIP 105565 / TT01) (Photorhabdus luminescens subsp. laumondii)).